Consider the following 451-residue polypeptide: UDP-glucosyltransferase 74AE2 (451 aa).

H17 acts as the Proton acceptor in catalysis. H17 serves as a coordination point for an anthocyanidin. D108 acts as the Charge relay in catalysis. Residues T130, Q330, H345, W348, N349, S350, E353, D369, and Q370 each coordinate UDP-alpha-D-glucose.

Belongs to the UDP-glycosyltransferase family. Expressed at higher levels in roots than in leaves.

The catalysed reaction is (20S)-ginsenoside C-K + UDP-alpha-D-glucose = (20S)-ginsenoside F2 + UDP + H(+). It carries out the reaction (20S)-protopanaxadiol + UDP-alpha-D-glucose = (20S)-ginsenoside Rh2 + UDP + H(+). It participates in secondary metabolite biosynthesis; terpenoid biosynthesis. Its function is as follows. Component of the dammarane-type triterpene saponins (e.g. PPD-type ginsenosides or panaxosides) biosynthetic pathway. Glycosyltransferase that catalyzes the biosynthesis of ginsenoside Rh2 from protopanaxadiol (PPD) and the conversion of compound K to ginsenoside F2. The polypeptide is UDP-glucosyltransferase 74AE2 (Panax ginseng (Korean ginseng)).